A 645-amino-acid chain; its full sequence is UPF0313 protein CLB_0243 (645 aa).

The region spanning 295–566 (AIKEVKFSIT…RMQRALLQFS (272 aa)) is the Radical SAM core domain. [4Fe-4S] cluster is bound by residues Cys309, Cys313, and Cys316. The segment at 598–645 (NKPYKKSHKKNNAKNNNNHYNKNNNYNKNKDISKKNKKNSLSKHKKRK) is disordered. The segment covering 600-609 (PYKKSHKKNN) has biased composition (basic residues). Residues 610–624 (AKNNNNHYNKNNNYN) show a composition bias toward low complexity. The span at 632–645 (KNKKNSLSKHKKRK) shows a compositional bias: basic residues.

The protein belongs to the UPF0313 family. The cofactor is [4Fe-4S] cluster.

The sequence is that of UPF0313 protein CLB_0243 from Clostridium botulinum (strain ATCC 19397 / Type A).